A 347-amino-acid chain; its full sequence is Nod factor export ATP-binding protein I (347 aa).

Over residues 1–11 (MGENMEREMLR) the composition is skewed to basic and acidic residues. Residues 1-32 (MGENMEREMLRPKTIAMDQNSASARSNPEREI) are disordered. Residues 17-26 (MDQNSASARS) show a composition bias toward polar residues. In terms of domain architecture, ABC transporter spans 49-279 (IDLQAVTMIY…IIGCPVIEVY (231 aa)). 81-88 (GPNGAGKS) provides a ligand contact to ATP.

Belongs to the ABC transporter superfamily. Lipooligosaccharide exporter (TC 3.A.1.102) family. The complex is composed of two ATP-binding proteins (NodI) and two transmembrane proteins (NodJ).

The protein resides in the cell inner membrane. In terms of biological role, part of the ABC transporter complex NodIJ involved in the export of the nodulation factors (Nod factors), the bacterial signal molecules that induce symbiosis and subsequent nodulation induction. Nod factors are LCO (lipo-chitin oligosaccharide), a modified beta-1,4-linked N-acetylglucosamine oligosaccharide. This subunit is responsible for energy coupling to the transport system. This Neorhizobium galegae (Rhizobium galegae) protein is Nod factor export ATP-binding protein I.